The primary structure comprises 277 residues: tRNA uridine(34) hydroxylase (277 aa).

A Rhodanese domain is found at 126-221; sequence SSPDVHVIDT…YLETMRGDDS (96 aa). Residue C181 is the Cysteine persulfide intermediate of the active site.

Belongs to the TrhO family.

The enzyme catalyses uridine(34) in tRNA + AH2 + O2 = 5-hydroxyuridine(34) in tRNA + A + H2O. Catalyzes oxygen-dependent 5-hydroxyuridine (ho5U) modification at position 34 in tRNAs. The protein is tRNA uridine(34) hydroxylase of Anaplasma marginale (strain St. Maries).